Here is a 509-residue protein sequence, read N- to C-terminus: Serine/threonine protein kinase OSK4 (509 aa).

One can recognise a Protein kinase domain in the interval 17-269; it reads YNLGRTLGIG…IREIREHQWF (253 aa). Residues 23–31 and Lys-46 each bind ATP; that span reads LGIGSFGKV. Asp-140 functions as the Proton acceptor in the catalytic mechanism. The region spanning 290 to 330 is the UBA domain; the sequence is MIDEDTLQDVVNLGYEKDHVCESLRNRLQNEATVAYYLLLD. Residues 460 to 508 form the KA1 domain; the sequence is NGRLPAVIKFEIQLYKSRDEKYLLDMQRVTGPQLLFLDFCAAFLTKLRV.

The protein belongs to the protein kinase superfamily. Ser/Thr protein kinase family. As to quaternary structure, interacts with HDR1. As to expression, strongly expressed in immature seeds. Mostly expressed in panicles, leaf sheaths and roots, and to a lower extent, in germinating seeds and leaf blades.

It is found in the nucleus. It carries out the reaction L-seryl-[protein] + ATP = O-phospho-L-seryl-[protein] + ADP + H(+). The catalysed reaction is L-threonyl-[protein] + ATP = O-phospho-L-threonyl-[protein] + ADP + H(+). In terms of biological role, suppressor of flowering in long days (LD) via the that up-regulation of HD1 and the down-regulation of EHD1. Can phosphorylate HD1 in the presence of HDR1. The sequence is that of Serine/threonine protein kinase OSK4 from Oryza sativa subsp. indica (Rice).